Here is a 1025-residue protein sequence, read N- to C-terminus: Multidrug resistance protein MdtC (1025 aa).

12 consecutive transmembrane segments (helical) span residues 3-23, 333-353, 360-380, 387-407, 431-451, 463-483, 528-548, 853-873, 875-895, 897-917, 953-973, and 984-1004; these read FFAL…AITL, EVEQ…FLFL, IIPA…MYLC, LSLM…IVVL, VGFT…PLLL, FAVT…TLTP, LVGV…ISIP, VILI…LYES, VHPL…LLAL, LFNA…IGIV, PIMM…LSGG, and ITIV…TPVV.

It belongs to the resistance-nodulation-cell division (RND) (TC 2.A.6) family. MdtC subfamily. As to quaternary structure, part of a tripartite efflux system composed of MdtA, MdtB and MdtC. MdtC forms a heteromultimer with MdtB.

It is found in the cell inner membrane. Functionally, the MdtABC tripartite complex confers resistance against novobiocin and deoxycholate. In Escherichia coli O17:K52:H18 (strain UMN026 / ExPEC), this protein is Multidrug resistance protein MdtC.